The sequence spans 175 residues: ATP synthase subunit delta (175 aa).

The protein belongs to the ATPase delta chain family. In terms of assembly, F-type ATPases have 2 components, F(1) - the catalytic core - and F(0) - the membrane proton channel. F(1) has five subunits: alpha(3), beta(3), gamma(1), delta(1), epsilon(1). F(0) has three main subunits: a(1), b(2) and c(10-14). The alpha and beta chains form an alternating ring which encloses part of the gamma chain. F(1) is attached to F(0) by a central stalk formed by the gamma and epsilon chains, while a peripheral stalk is formed by the delta and b chains.

It localises to the cell membrane. F(1)F(0) ATP synthase produces ATP from ADP in the presence of a proton or sodium gradient. F-type ATPases consist of two structural domains, F(1) containing the extramembraneous catalytic core and F(0) containing the membrane proton channel, linked together by a central stalk and a peripheral stalk. During catalysis, ATP synthesis in the catalytic domain of F(1) is coupled via a rotary mechanism of the central stalk subunits to proton translocation. In terms of biological role, this protein is part of the stalk that links CF(0) to CF(1). It either transmits conformational changes from CF(0) to CF(1) or is implicated in proton conduction. This chain is ATP synthase subunit delta, found in Stenotrophomonas maltophilia (strain K279a).